The chain runs to 113 residues: T cell receptor alpha variable 13-2 (113 aa).

The signal sequence occupies residues 1–21 (MAGIRALFMYLWLQLDWVSRG). An Ig-like domain is found at 22–113 (ESVGLHLPTL…DSAVYFCAEN (92 aa)). Cysteine 43 and cysteine 110 are oxidised to a cystine. Asparagine 87 is a glycosylation site (N-linked (GlcNAc...) asparagine).

Alpha-beta TR is a heterodimer composed of an alpha and beta chain; disulfide-linked. The alpha-beta TR is associated with the transmembrane signaling CD3 coreceptor proteins to form the TR-CD3 (TcR or TCR). The assembly of alpha-beta TR heterodimers with CD3 occurs in the endoplasmic reticulum where a single alpha-beta TR heterodimer associates with one CD3D-CD3E heterodimer, one CD3G-CD3E heterodimer and one CD247 homodimer forming a stable octameric structure. CD3D-CD3E and CD3G-CD3E heterodimers preferentially associate with TR alpha and TR beta chains, respectively. The association of the CD247 homodimer is the last step of TcR assembly in the endoplasmic reticulum and is required for transport to the cell surface.

It localises to the cell membrane. In terms of biological role, v region of the variable domain of T cell receptor (TR) alpha chain that participates in the antigen recognition. Alpha-beta T cell receptors are antigen specific receptors which are essential to the immune response and are present on the cell surface of T lymphocytes. Recognize peptide-major histocompatibility (MH) (pMH) complexes that are displayed by antigen presenting cells (APC), a prerequisite for efficient T cell adaptive immunity against pathogens. Binding of alpha-beta TR to pMH complex initiates TR-CD3 clustering on the cell surface and intracellular activation of LCK that phosphorylates the ITAM motifs of CD3G, CD3D, CD3E and CD247 enabling the recruitment of ZAP70. In turn ZAP70 phosphorylates LAT, which recruits numerous signaling molecules to form the LAT signalosome. The LAT signalosome propagates signal branching to three major signaling pathways, the calcium, the mitogen-activated protein kinase (MAPK) kinase and the nuclear factor NF-kappa-B (NF-kB) pathways, leading to the mobilization of transcription factors that are critical for gene expression and essential for T cell growth and differentiation. The T cell repertoire is generated in the thymus, by V-(D)-J rearrangement. This repertoire is then shaped by intrathymic selection events to generate a peripheral T cell pool of self-MH restricted, non-autoaggressive T cells. Post-thymic interaction of alpha-beta TR with the pMH complexes shapes TR structural and functional avidity. This chain is T cell receptor alpha variable 13-2, found in Homo sapiens (Human).